The following is a 403-amino-acid chain: MTESTFPQYPRLVLSKGREKSLLRRHPWVFSGAVSRLEGKANLGETIDIVDHQGKWLARGAWSPASQIRARVWTFDKTESIDIAFFTRRLRQAQQWRDWLAKKDGLDSYRLIAGESDGLPGVTIDRFGHFLVLQLLSAGAEYQRAALISALQTCYPDCAIYDRSDVAVRKKEGMALTQGPVTGELPPALLPIEEHGMKLLVDIQGGHKTGYYLDQRDSRLVTRRYVENQRVLNCFSYTGGFAVSALMGGCRQVVSVDTSQDALDIARQNVELNQLDLSKAEFVRDDVFKLLRAYREHGEKFDVIIMDPPKFVENKSQLMGACRGYKDINMLAIQLLNPGGILLTFSCSGLMTSDLFQKIIADAAIDAGRDVQFIEQFRQAADHPVIATYPEGLYLKGFACRVM.

One can recognise a PUA domain in the interval Tyr-9–Arg-88.

This sequence belongs to the methyltransferase superfamily. RlmI family.

It is found in the cytoplasm. It carries out the reaction cytidine(1962) in 23S rRNA + S-adenosyl-L-methionine = 5-methylcytidine(1962) in 23S rRNA + S-adenosyl-L-homocysteine + H(+). Specifically methylates the cytosine at position 1962 (m5C1962) of 23S rRNA. This is Ribosomal RNA large subunit methyltransferase I from Salmonella typhi.